We begin with the raw amino-acid sequence, 1138 residues long: Exportin-6-B (1138 aa).

One can recognise an Importin N-terminal domain in the interval 31–97 (IESLLNNFAQ…RSSLPKLLLS (67 aa)). Residues 291–307 (SVTTNTTSSVVNGGSSS) are compositionally biased toward low complexity. Residues 291 to 315 (SVTTNTTSSVVNGGSSSPPLHSAAP) are disordered.

The protein belongs to the exportin family.

It localises to the nucleus. The protein localises to the cytoplasm. Its function is as follows. Mediates the nuclear export of actin and profilin-actin complexes in somatic cells. Oocyte nuclei lack active actin export. In terms of biological role, mediates the nuclear export of actin and profilin-actin complexes in somatic cells. In Xenopus laevis (African clawed frog), this protein is Exportin-6-B (xpo6-b).